We begin with the raw amino-acid sequence, 285 residues long: ATP synthase gamma chain (285 aa).

This sequence belongs to the ATPase gamma chain family. As to quaternary structure, F-type ATPases have 2 components, CF(1) - the catalytic core - and CF(0) - the membrane proton channel. CF(1) has five subunits: alpha(3), beta(3), gamma(1), delta(1), epsilon(1). CF(0) has three main subunits: a, b and c.

The protein resides in the cell membrane. Its function is as follows. Produces ATP from ADP in the presence of a proton gradient across the membrane. The gamma chain is believed to be important in regulating ATPase activity and the flow of protons through the CF(0) complex. The polypeptide is ATP synthase gamma chain (Geobacillus kaustophilus (strain HTA426)).